Here is a 498-residue protein sequence, read N- to C-terminus: MSGYILAIDQGTTSTRSMLFDRNMRVVGLGQQEFTQHFPSSGWVEHDAEEIWKSVQSTIRIALAQAGISAADVAAIGITNQRKTTVVWDRISGKPVHRAIVWQDRRTAQFCDELKRRNLEPLFTEKTGLLLDPYFSGTKLAWLLNHVPGLRERAQKGQVCFGTIDSWLIYKLTGGKAHVTDATNASRTLIYHIGENRWDDELLDILGIPAAMLPEVKDCAADFGMTDPALFGVSIPILGVAGDQQAAVIGNACFEPGMMKSTYGTGCFALLNTGTDRVTSSNRLLTTIAYRLDGVTTYALEGSIFIAGAAVQWLRDEMGFISVASEVSALAEKADPNQRIYLVPAFTGLGAPYWDAEARGAIFGLTRGTGRAEFARAALESVAYQTFDLLEAMQGDWKGATNHTVLRVDGGMVASDWTMQRLADILNAPVDRPVFLETTVLGAAWLAASRAGIWPDRKGFSERWQRDCRFEPAMPEKERESAIAGWRDSVSRCLTRPQ.

ADP is bound at residue T12. The ATP site is built by T12, T13, and S14. T12 contacts sn-glycerol 3-phosphate. R16 lines the ADP pocket. Positions 82, 134, and 243 each coordinate sn-glycerol 3-phosphate. Residues R82, Y134, D243, and Q244 each contribute to the glycerol site. ADP is bound by residues T265 and G308. ATP-binding residues include T265, G308, Q312, and G411. G411 contributes to the ADP binding site.

This sequence belongs to the FGGY kinase family.

It catalyses the reaction glycerol + ATP = sn-glycerol 3-phosphate + ADP + H(+). It functions in the pathway polyol metabolism; glycerol degradation via glycerol kinase pathway; sn-glycerol 3-phosphate from glycerol: step 1/1. With respect to regulation, inhibited by fructose 1,6-bisphosphate (FBP). In terms of biological role, key enzyme in the regulation of glycerol uptake and metabolism. Catalyzes the phosphorylation of glycerol to yield sn-glycerol 3-phosphate. The protein is Glycerol kinase of Brucella suis (strain ATCC 23445 / NCTC 10510).